Here is a 465-residue protein sequence, read N- to C-terminus: Mothers against decapentaplegic homolog 1 (465 aa).

Met1 is modified (N-acetylmethionine). Positions 12-136 (PAVKRLLGWK…YKRVESPVLP (125 aa)) constitute an MH1 domain. Zn(2+) is bound by residues Cys64, Cys109, Cys121, and His126. The disordered stretch occupies residues 162–246 (NEPHMPLNAT…DGSQPMDTNM (85 aa)). Low complexity predominate over residues 179–212 (PNSHPFPHSPNSSYPNSPGGSSSTYPHSPTSSDP). The span at 221–232 (DTPPPAYLPPED) shows a compositional bias: pro residues. Residues 271–465 (WCSIVYYELN…SPHNPISSVS (195 aa)) enclose the MH2 domain. The residue at position 322 (Thr322) is a Phosphothreonine; by MINK1, TNIK and MAP4K4. Residues 418-428 (KGWGAEYHRQD) are L3 loop. Ser463 and Ser465 each carry phosphoserine.

The protein belongs to the dwarfin/SMAD family. In terms of assembly, found in a complex with SMAD4 and YY1. Interacts with HGS, NANOG and ZCCHC12. Upon C-terminus phosphorylation: forms trimers with another SMAD1 and the co-SMAD SMAD4. Interacts with PEBP2-alpha subunit, CREB-binding protein (CBP), p300, SMURF1, SMURF2, USP15 and HOXC8. Associates with ZNF423 or ZNF521 in response to BMP2 leading to activate transcription of BMP target genes. Interacts with SKOR1. Interacts (via MH2 domain) with LEMD3. Binding to LEMD3 results in at least a partial reduction of receptor-mediated phosphorylation. Forms a ternary complex with PSMB4 and OAZ1 before PSMB4 is incorporated into the 20S proteasome. Interacts (via MH2 domain) with FAM83G (via MH2 domain); in a SMAD4-independent manner. Interacts with ZC3H3. Interacts with TMEM119. Interacts (via MH1 and MH2 domains) with ZNF8. Interacts with RANBP3L; the interaction increases when SMAD1 is not phosphorylated and mediates SMAD1 nuclear export. Interacts with EGR1; this interaction inhibits SMAD1 dephosphorylation. Interacts with SMAD6. Interacts with YAP1. Interacts with MTMR4; negatively regulates BMP signaling through SMAD1 dephosphorylation and retention in endosomes. Post-translationally, phosphorylation of the C-terminal SVS motif by BMP type 1 receptor kinase activates SMAD1 by promoting dissociation from the receptor and trimerization with SMAD4. Phosphorylation by ERK2 MAP kinase in response to EGF or HGF prevents SMAD1 nuclear accumulation and transcriptional activity in response to BMP. Dephosphorylation, probably by PPM1A, induces its export from the nucleus to the cytoplasm. Dephosphorylation is inhibited by association with EGR1. Phosphorylation by CDK8/9 creates binding sites for YAP1, and subsequent phosphorylation by GSK3 switches off YAP1 binding and adds binding sites for SMURF1. In terms of processing, ubiquitinated by SMAD-specific E3 ubiquitin ligase SMURF1, leading to its degradation. Monoubiquitinated, leading to prevent DNA-binding. Deubiquitination by USP15 alleviates inhibition and promotes activation of TGF-beta target genes. Dephosphorylation, probably by PPM1A, induces its export from the nucleus to the cytoplasm. Phospho-SMAD1 is ubiquitinated by CHIP leading to disruption of the SMAD1-SMAD4 complex. In terms of tissue distribution, ubiquitous.

The protein resides in the cytoplasm. It is found in the nucleus. In terms of biological role, transcriptional modulator that plays a role in various cellular processes, including embryonic development, cell differentiation, and tissue homeostasis. Upon BMP ligand binding to their receptors at the cell surface, is phosphorylated by activated type I BMP receptors (BMPRIs) and associates with SMAD4 to form a heteromeric complex which translocates into the nucleus acting as transcription factor. In turn, the hetero-trimeric complex recognizes cis-regulatory elements containing Smad Binding Elements (SBEs) to modulate the outcome of the signaling network. SMAD1/OAZ1/PSMB4 complex mediates the degradation of the CREBBP/EP300 repressor SNIP1. Positively regulates BMP4-induced expression of odontogenic development regulator MSX1 following IPO7-mediated nuclear import. This chain is Mothers against decapentaplegic homolog 1 (Smad1), found in Mus musculus (Mouse).